Consider the following 75-residue polypeptide: Scuwaprin-a (75 aa).

The N-terminal stretch at 1 to 24 is a signal peptide; sequence MSSGGLLLLLGLLTLWAELTPVSG. The 46-residue stretch at 27-72 folds into the WAP domain; sequence RPKKPGLCPPRPQKPPCVKECKNDWSCPGQQKCCSYGCIDECRDPI. Intrachain disulfides connect Cys-34-Cys-60, Cys-43-Cys-64, Cys-47-Cys-59, and Cys-53-Cys-68.

Belongs to the venom waprin family. Expressed by the venom gland.

It is found in the secreted. In terms of biological role, damages membranes of susceptible bacteria. Has no hemolytic activity. Not toxic to mice. Does not inhibit the proteinases elastase and cathepsin G. This Oxyuranus scutellatus scutellatus (Australian taipan) protein is Scuwaprin-a.